A 357-amino-acid chain; its full sequence is Trans-enoyl reductase resD (357 aa).

Tyr-211 contacts NADP(+).

This sequence belongs to the zinc-containing alcohol dehydrogenase family.

It functions in the pathway antifungal biosynthesis. Trans-enoyl reductase; part of the gene cluster that mediates the biosynthesis of the tetrahydropyranyl antifungal agent restricticin that acts as an inhibitor of CYP51 and blocks the ergosterol biosynthesis. The highly reducing polyketide synthase resH, the short chain dehydrogenase resG, the cyclase resF, the FAD-dependent monooxygenase resA and the enoylreductase resD are required to generate the first stable intermediate desmethylrestrictinol. ResH with resD biosynthesize the first polyketide chain intermediate that is reduced by resG, followed by epoxidation by resA before 6-endo cyclization via epoxide opening by resF leads to desmethylrestrictinol. The methyltransferase resE then catalyzes the C4 O-methylation of desmethylrestrictinol to produce restrictinol, and the nonribosomal peptide synthetase resC catalyzes the C3 esterification of restrictinol with glycine that leads to restricticin. The sequence is that of Trans-enoyl reductase resD from Aspergillus sclerotiorum.